The chain runs to 141 residues: Protein stum homolog (141 aa).

Ser26 bears the Phosphoserine mark. 2 consecutive transmembrane segments (helical) span residues 51–71 (FPVA…GTFV) and 87–107 (RHVC…VLTA).

This sequence belongs to the SPEC3 family. Stum subfamily.

The protein localises to the membrane. In Mus musculus (Mouse), this protein is Protein stum homolog.